The following is a 192-amino-acid chain: Putative acetyltransferase YjbC (192 aa).

Residues 1 to 139 (MNWYEKLSEY…MEILYWSPKT (139 aa)) enclose the N-acetyltransferase domain.

It localises to the cytoplasm. In Bacillus subtilis (strain 168), this protein is Putative acetyltransferase YjbC (yjbC).